A 331-amino-acid polypeptide reads, in one-letter code: Glutamyl-tRNA reductase (331 aa).

Substrate contacts are provided by residues 49–52 (TCNR), serine 107, 112–114 (EDQ), and glutamine 118. The Nucleophile role is filled by cysteine 50. 184–189 (GNGEIG) is an NADP(+) binding site.

Belongs to the glutamyl-tRNA reductase family. Homodimer.

The catalysed reaction is (S)-4-amino-5-oxopentanoate + tRNA(Glu) + NADP(+) = L-glutamyl-tRNA(Glu) + NADPH + H(+). Its pathway is porphyrin-containing compound metabolism; protoporphyrin-IX biosynthesis; 5-aminolevulinate from L-glutamyl-tRNA(Glu): step 1/2. In terms of biological role, catalyzes the NADPH-dependent reduction of glutamyl-tRNA(Glu) to glutamate 1-semialdehyde (GSA). This is Glutamyl-tRNA reductase from Acetivibrio thermocellus (strain ATCC 27405 / DSM 1237 / JCM 9322 / NBRC 103400 / NCIMB 10682 / NRRL B-4536 / VPI 7372) (Clostridium thermocellum).